Consider the following 535-residue polypeptide: Suppressor of cytokine signaling 6 (535 aa).

Positions 80 to 89 (RLSAKQKSKG) are enriched in basic residues. Residues 80-105 (RLSAKQKSKGKAGTPSGSSADEDTFS) form a disordered region. Positions 384–491 (WYWGPITRWE…TYPVRLTNPV (108 aa)) constitute an SH2 domain. An SOCS box domain is found at 486–535 (RLTNPVSRFMQVRSLQYLCRFVIRQYTRIDLIQKLPLPNKMKDYLQEKHY).

Interacts with RBCK1. Interacts with phosphorylated IRS4. Interacts with PIM3. Interacts with KIT (phosphorylated).

It participates in protein modification; protein ubiquitination. Functionally, SOCS family proteins form part of a classical negative feedback system that regulates cytokine signal transduction. May be a substrate recognition component of a SCF-like ECS (Elongin BC-CUL2/5-SOCS-box protein) E3 ubiquitin-protein ligase complex which mediates the ubiquitination and subsequent proteasomal degradation of target proteins. Regulates KIT degradation by ubiquitination of the tyrosine-phosphorylated receptor. This Homo sapiens (Human) protein is Suppressor of cytokine signaling 6 (SOCS6).